The primary structure comprises 85 residues: N.vectensis toxin 1 6 (85 aa).

The N-terminal stretch at 1 to 20 is a signal peptide; it reads MASFKIVIVCLALLVAVACA. Positions 21–36 are excised as a propeptide; it reads RRRDMMSDDELDYHYS. 3 cysteine pairs are disulfide-bonded: C42–C82, C44–C72, and C65–C83.

Belongs to the sea anemone sodium channel inhibitory toxin family. Type II subfamily. In terms of tissue distribution, expressed in ectodermal glands and in clumps outside of the extodermal layer. Is not expressed in nematocytes. In adult female tissues, shows similar expression levels in mesenteries (gametes-producing tissue), tentacles, pharynx and physa.

Its subcellular location is the secreted. In terms of biological role, binds to site 3 of voltage-gated sodium channels and inhibits the inactivation process. Is highly active on DmNav1/TipE (drosophila) and is only extremely weakly active on rat Nav1.4-beta-1/SCN4A-SCN1B, and on human Nav1.5-beta-1/SCN5A-beta-1. This reveals high specificity for arthropod over mammalian channels. In vivo, when released into the medium, this recombinant toxin induces impaired swimming, paralysis and death of the crustacean A.nauplii within several hours. Also causes paralysis of cherry shrimps immediately after injection at very low doses. Its effect on zebrafish (D.rerio) larvae is also rapid, since it induces tail twitching accompanied by impaired swimming after 20 minutes and complete paralysis within 45 minutes. It has also been observed to cause death of zebrafish larvae within 1 hour. This chain is N.vectensis toxin 1 6, found in Nematostella vectensis (Starlet sea anemone).